We begin with the raw amino-acid sequence, 302 residues long: Vacuolar iron transporter (302 aa).

Over 1–70 (MPASGAGYAG…HTNTSSDYVK (70 aa)) the chain is Cytoplasmic. A helical transmembrane segment spans residues 71–91 (AVVFGGLDGIVTIFAIVAGCV). Topologically, residues 92–99 (GADLSCSQ) are vacuolar. The chain crosses the membrane as a helical span at residues 100 to 120 (VLMVGLGNLLADAISMGFGEY). At 121–211 (VSAAAEKDFV…IKRGLVMFTA (91 aa)) the chain is on the cytoplasmic side. Glutamate 137, glutamate 140, glutamate 148, glutamate 151, methionine 185, and glutamate 189 together coordinate Fe cation. A helical membrane pass occupies residues 212 to 232 (FCFFGLLPLAGFIGWVAAFGL). The Vacuolar portion of the chain corresponds to 233–235 (GAE). Residues 236 to 256 (ADMAFLMACVVSIMTLFILGF) traverse the membrane as a helical segment. Residues 257 to 276 (SKGKFVGQNPTKSACLMAMN) lie on the Cytoplasmic side of the membrane. The helical transmembrane segment at 277–297 (GGCAGTVAYGVGSLLQLVVGA) threads the bilayer. The Vacuolar segment spans residues 298–302 (NLTAA).

It belongs to the CCC1 family.

It is found in the vacuole membrane. The enzyme catalyses Fe(2+)(in) = Fe(2+)(out). Its function is as follows. Vacuolar iron transporter involved in the transfer of iron ions from the cytosol to the vacuole for intracellular iron storage. Plays an essential role in detoxification of excess iron. Important for parasite survival within macrophages and parasite virulence in vivo. The polypeptide is Vacuolar iron transporter (Toxoplasma gondii (strain ATCC 50861 / VEG)).